Here is a 492-residue protein sequence, read N- to C-terminus: 5-taurinomethyluridine-[tRNA] synthase subunit GTPB3, mitochondrial (492 aa).

A mitochondrion-targeting transit peptide spans 1-20 (MWRGLWTLAAQAARGPRRLC). Residues Arg52, Glu112, and Lys152 each coordinate 5,10-methylenetetrahydrofolate. The TrmE-type G domain maps to 249-416 (GVHVVVTGPP…LLEALRKELA (168 aa)). Residues 256-263 (GPPNAGKS), 282-286 (GTTRD), 303-306 (DTAG), 374-377 (NKSD), and 397-399 (SCL) each bind GTP. Asn259 serves as a coordination point for K(+). Residues Ser263 and Thr284 each coordinate Mg(2+). Residue Lys492 coordinates 5,10-methylenetetrahydrofolate.

It belongs to the TRAFAC class TrmE-Era-EngA-EngB-Septin-like GTPase superfamily. TrmE GTPase family. Homodimer; forms a dimer in the presence of potassium. Interacts with MTO1; forms the GTPBP3-MTO1 complex composed of homodimers of GTPBP3 and MTO1. In terms of assembly, homodimer, forms homodimer in vivo. The cofactor is K(+). In terms of tissue distribution, ubiquitously expressed.

It localises to the mitochondrion. It is found in the cytoplasm. The enzyme catalyses GTP + H2O = GDP + phosphate + H(+). GTPase component of the GTPBP3-MTO1 complex that catalyzes the 5-taurinomethyluridine (taum(5)U) modification at the 34th wobble position (U34) of mitochondrial tRNAs (mt-tRNAs), which plays a role in mt-tRNA decoding and mitochondrial translation. Taum(5)U formation on mammalian mt-tRNA requires the presence of both GTPBP3-mediated GTPase activity and MTO1 catalytic activity. The polypeptide is 5-taurinomethyluridine-[tRNA] synthase subunit GTPB3, mitochondrial (Homo sapiens (Human)).